The primary structure comprises 168 residues: Putative adenylate kinase (168 aa).

5 residues coordinate ATP: Gly10, Gly12, Lys13, Thr14, and Thr15. Positions 28-51 (HLNERIREEGLDAGRDEERDSLVA) are NMP. Residues 97-107 (DRGEPAAKAAE) are LID. ATP is bound at residue Arg98.

This sequence belongs to the adenylate kinase family. AK6 subfamily. As to quaternary structure, interacts with uS11. Not a structural component of 40S pre-ribosomes, but transiently interacts with them by binding to uS11.

The catalysed reaction is AMP + ATP = 2 ADP. It carries out the reaction ATP + H2O = ADP + phosphate + H(+). Functionally, broad-specificity nucleoside monophosphate (NMP) kinase that catalyzes the reversible transfer of the terminal phosphate group between nucleoside triphosphates and monophosphates. Also has ATPase activity. Involved in the late maturation steps of the 30S ribosomal particles, specifically 16S rRNA maturation. While NMP activity is not required for ribosome maturation, ATPase activity is. Associates transiently with small ribosomal subunit protein uS11. ATP hydrolysis breaks the interaction with uS11. May temporarily remove uS11 from the ribosome to enable a conformational change of the ribosomal RNA that is needed for the final maturation step of the small ribosomal subunit. The protein is Putative adenylate kinase of Natronomonas pharaonis (strain ATCC 35678 / DSM 2160 / CIP 103997 / JCM 8858 / NBRC 14720 / NCIMB 2260 / Gabara) (Halobacterium pharaonis).